Here is a 182-residue protein sequence, read N- to C-terminus: CDP-diacylglycerol--glycerol-3-phosphate 3-phosphatidyltransferase (182 aa).

At 2–12 the chain is on the cytoplasmic side; that stretch reads QFNIPTLLTLF. Residues 13–37 form a helical membrane-spanning segment; the sequence is RVILIPFFVLVFYLPVTWSPFAAAL. Topologically, residues 38–60 are periplasmic; the sequence is IFCVAAVTDWFDGFLARRWNQST. Residues 61–81 form a helical membrane-spanning segment; the sequence is RFGAFLDPVADKVLVAIAMVL. At 82–86 the chain is on the cytoplasmic side; the sequence is VTEHY. Residues 87–107 form a helical membrane-spanning segment; it reads HSWWVTLPAATMIAREIIISA. Residues 108 to 145 are Periplasmic-facing; it reads LREWMAELGKRSSVAVSWIGKVKTTAQMVALAWLLWRP. A helical membrane pass occupies residues 146-168; it reads NIWVEYAGIALFFVAAVLTLWSM. The Cytoplasmic portion of the chain corresponds to 169 to 181; the sequence is LQYLSAARADLLD.

This sequence belongs to the CDP-alcohol phosphatidyltransferase class-I family.

It is found in the cell inner membrane. The enzyme catalyses a CDP-1,2-diacyl-sn-glycerol + sn-glycerol 3-phosphate = a 1,2-diacyl-sn-glycero-3-phospho-(1'-sn-glycero-3'-phosphate) + CMP + H(+). The protein operates within phospholipid metabolism; phosphatidylglycerol biosynthesis; phosphatidylglycerol from CDP-diacylglycerol: step 1/2. Catalyzes the conversion of cytidine diphosphate diacylglycerol (CDP-DG) and glycerol 3-phosphate into phosphatidylglycerol. Essential for the synthesis of anionic phospholipids, thereby playing a role in balancing the ratio of zwitterionic and anionic phospholipids, which is thought to be important for normal membrane function. The polypeptide is CDP-diacylglycerol--glycerol-3-phosphate 3-phosphatidyltransferase (Shigella sonnei (strain Ss046)).